A 1323-amino-acid polypeptide reads, in one-letter code: Lysine-specific demethylase 3A (1323 aa).

Disordered stretches follow at residues 255 to 287 (TRTGAVKRKSSENNGSSVSKQAKSCSEASPSMC), 307 to 337 (ATPSSKDPRQQNTPQAANSPPNIGAKLPQGC), and 385 to 416 (SEPKGSCIQPKTNTDQESRLESAPQPVTGLPK). Ser264 carries the phosphoserine modification. Polar residues-rich tracts occupy residues 266–283 (ENNGSSVSKQAKSCSEAS) and 307–327 (ATPSSKDPRQQNTPQAANSPP). Phosphoserine is present on Ser325. Ser446 is subject to Phosphoserine. 2 disordered regions span residues 468–487 (AEKKVEPSHLGSQSQNLKET) and 495–517 (SCCTRSSNKTQTPPARKSVLTDP). 2 stretches are compositionally biased toward polar residues: residues 477 to 486 (LGSQSQNLKE) and 495 to 507 (SCCTRSSNKTQTP). The C6-type zinc-finger motif lies at 662–687 (CDVCDTTIFNLHWVCPRCGFGVCVDC). An LXXLL motif motif is present at residues 885–889 (LRNLL). Lys895 is modified (N6-acetyllysine). The region spanning 1060–1283 (MPSRFDDLMA…HCFWLTQEFR (224 aa)) is the JmjC domain. His1122, Asp1124, and His1251 together coordinate Fe cation.

This sequence belongs to the JHDM2 histone demethylase family. As to quaternary structure, interacts with VRK1. Requires Fe(2+) as cofactor. As to expression, highly expressed in testis (at protein level). Also expressed at high levels in tissues responsive to sympathetic nerve activity such as brown adipose tissue and skeletal muscle.

It localises to the cytoplasm. Its subcellular location is the nucleus. It carries out the reaction N(6),N(6)-dimethyl-L-lysyl(9)-[histone H3] + 2 2-oxoglutarate + 2 O2 = L-lysyl(9)-[histone H3] + 2 formaldehyde + 2 succinate + 2 CO2. Its function is as follows. Histone demethylase that specifically demethylates 'Lys-9' of histone H3, thereby playing a central role in histone code. Preferentially demethylates mono- and dimethylated H3 'Lys-9' residue, with a preference for dimethylated residue, while it has weak or no activity on trimethylated H3 'Lys-9'. Demethylation of Lys residue generates formaldehyde and succinate. Involved in hormone-dependent transcriptional activation, by participating in recruitment to androgen-receptor target genes, resulting in H3 'Lys-9' demethylation and transcriptional activation. Involved in spermatogenesis by regulating expression of target genes such as PRM1 and TNP1 which are required for packaging and condensation of sperm chromatin. Involved in obesity resistance through regulation of metabolic genes such as PPARA and UCP1. The polypeptide is Lysine-specific demethylase 3A (Kdm3a) (Mus musculus (Mouse)).